The following is a 545-amino-acid chain: Chaperonin GroEL (545 aa).

ATP-binding positions include 31–34 (TLGP), 88–92 (DGTTT), G415, 478–480 (NAA), and D494.

It belongs to the chaperonin (HSP60) family. As to quaternary structure, forms a cylinder of 14 subunits composed of two heptameric rings stacked back-to-back. Interacts with the co-chaperonin GroES.

It is found in the cytoplasm. It carries out the reaction ATP + H2O + a folded polypeptide = ADP + phosphate + an unfolded polypeptide.. Together with its co-chaperonin GroES, plays an essential role in assisting protein folding. The GroEL-GroES system forms a nano-cage that allows encapsulation of the non-native substrate proteins and provides a physical environment optimized to promote and accelerate protein folding. The polypeptide is Chaperonin GroEL (Streptococcus pyogenes serotype M4 (strain MGAS10750)).